Reading from the N-terminus, the 1106-residue chain is Translation initiation factor IF-2 (1106 aa).

Low complexity-rich tracts occupy residues 57 to 72 (GKAA…PDAG) and 81 to 97 (APST…SAPP). 2 disordered regions span residues 57-434 (GKAA…QKVH) and 466-497 (PSKP…RQRR). 2 stretches are compositionally biased toward pro residues: residues 113 to 123 (PAKPAPSAPPS) and 138 to 148 (PAKPAPSAPPS). Low complexity predominate over residues 172 to 199 (AKPVAKPASAPAPARPAQPLRPQASNRP). Composition is skewed to pro residues over residues 200 to 214 (PQQP…PAAK) and 223 to 235 (TAPP…PGAP). Low complexity-rich tracts occupy residues 251–292 (PNQQ…QQRR), 319–329 (PQGRQGGAPSR), and 395–405 (YRPAAAPGMAG). Basic and acidic residues predominate over residues 408-422 (RRPDWDDSARLDALR). The span at 482–497 (ALRRRKKETTRQRQRR) shows a compositional bias: basic residues. Residues 598 to 771 (RRPPVVTVMG…LLVTEVEDLK (174 aa)) enclose the tr-type G domain. Residues 607 to 614 (GHVDHGKT) form a G1 region. 607-614 (GHVDHGKT) provides a ligand contact to GTP. Positions 632–636 (GITQH) are G2. The G3 stretch occupies residues 657–660 (DTPG). Residues 657–661 (DTPGH) and 711–714 (NKVD) contribute to the GTP site. Residues 711 to 714 (NKVD) form a G4 region. The tract at residues 747–749 (SAL) is G5.

The protein belongs to the TRAFAC class translation factor GTPase superfamily. Classic translation factor GTPase family. IF-2 subfamily.

Its subcellular location is the cytoplasm. One of the essential components for the initiation of protein synthesis. Protects formylmethionyl-tRNA from spontaneous hydrolysis and promotes its binding to the 30S ribosomal subunits. Also involved in the hydrolysis of GTP during the formation of the 70S ribosomal complex. The sequence is that of Translation initiation factor IF-2 from Synechococcus sp. (strain RCC307).